Consider the following 183-residue polypeptide: Cell division protein ZapC (183 aa).

It belongs to the ZapC family. In terms of assembly, interacts directly with FtsZ.

It localises to the cytoplasm. In terms of biological role, contributes to the efficiency of the cell division process by stabilizing the polymeric form of the cell division protein FtsZ. Acts by promoting interactions between FtsZ protofilaments and suppressing the GTPase activity of FtsZ. The chain is Cell division protein ZapC from Proteus mirabilis (strain HI4320).